Consider the following 202-residue polypeptide: Small ribosomal subunit protein uS3 (202 aa).

The KH type-2 domain occupies 18–87 (LNEYLQRQLV…NPQIDVVEVP (70 aa)).

It belongs to the universal ribosomal protein uS3 family. Part of the 30S ribosomal subunit.

Functionally, binds the lower part of the 30S subunit head. The polypeptide is Small ribosomal subunit protein uS3 (Thermofilum pendens (strain DSM 2475 / Hrk 5)).